Reading from the N-terminus, the 276-residue chain is Urease accessory protein UreD (276 aa).

It belongs to the UreD family. In terms of assembly, ureD, UreF and UreG form a complex that acts as a GTP-hydrolysis-dependent molecular chaperone, activating the urease apoprotein by helping to assemble the nickel containing metallocenter of UreC. The UreE protein probably delivers the nickel.

The protein localises to the cytoplasm. Functionally, required for maturation of urease via the functional incorporation of the urease nickel metallocenter. The polypeptide is Urease accessory protein UreD (Paracidovorax citrulli (strain AAC00-1) (Acidovorax citrulli)).